The primary structure comprises 253 residues: Triosephosphate isomerase (253 aa).

Residue N9–K11 participates in substrate binding. H95 serves as the catalytic Electrophile. E167 (proton acceptor) is an active-site residue. Substrate-binding positions include G173, S213, and G234–G235. S213 is modified (phosphoserine).

It belongs to the triosephosphate isomerase family. Homodimer.

The protein localises to the cytoplasm. It carries out the reaction D-glyceraldehyde 3-phosphate = dihydroxyacetone phosphate. Its pathway is carbohydrate biosynthesis; gluconeogenesis. It functions in the pathway carbohydrate degradation; glycolysis; D-glyceraldehyde 3-phosphate from glycerone phosphate: step 1/1. Its function is as follows. Involved in the gluconeogenesis. Catalyzes stereospecifically the conversion of dihydroxyacetone phosphate (DHAP) to D-glyceraldehyde-3-phosphate (G3P). This Lysinibacillus sphaericus (strain C3-41) protein is Triosephosphate isomerase.